We begin with the raw amino-acid sequence, 377 residues long: Floricaula/leafy homolog (377 aa).

The segment covering 116–126 (RRRLDEEDPRR) has biased composition (basic and acidic residues). The interval 116–190 (RRRLDEEDPR…RKKGQRKVVD (75 aa)) is disordered. Residues 131–141 (SGDNNTNTLDA) show a composition bias toward polar residues. 3 DNA-binding regions span residues 206-210 (REHPF), 275-282 (NKPKMRHY), and 346-349 (YVPT).

This sequence belongs to the FLO/LFY family. In developing inflorescences, leaf primordia and very young leaves.

Its subcellular location is the nucleus. Functionally, probable transcription factor. This Populus trichocarpa (Western balsam poplar) protein is Floricaula/leafy homolog (FL).